Reading from the N-terminus, the 341-residue chain is Ribosomal RNA small subunit methyltransferase H (341 aa).

Residues 47–49 (GGY), aspartate 64, phenylalanine 91, aspartate 109, and glutamine 116 each bind S-adenosyl-L-methionine.

The protein belongs to the methyltransferase superfamily. RsmH family.

It is found in the cytoplasm. The catalysed reaction is cytidine(1402) in 16S rRNA + S-adenosyl-L-methionine = N(4)-methylcytidine(1402) in 16S rRNA + S-adenosyl-L-homocysteine + H(+). Its function is as follows. Specifically methylates the N4 position of cytidine in position 1402 (C1402) of 16S rRNA. This Agrobacterium fabrum (strain C58 / ATCC 33970) (Agrobacterium tumefaciens (strain C58)) protein is Ribosomal RNA small subunit methyltransferase H.